The sequence spans 179 residues: TM2 domain-containing protein Y66D12A.21 (179 aa).

Residues 1–18 (MRQLLLTLSLISVSASDA) form the signal peptide. At 19-82 (TVKCDDLDPN…IFNRTVPSAC (64 aa)) the chain is on the extracellular side. An N-linked (GlcNAc...) asparagine glycan is attached at N75. Residues 83–105 (HYGAHVSYTTTVLLSIFLGFFGI) traverse the membrane as a helical segment. In terms of domain architecture, TM2 spans 88–135 (VSYTTTVLLSIFLGFFGIDRIYLGYYALGLIKMFSLGGLFVFWLVDII). Over 106 to 109 (DRIY) the chain is Cytoplasmic. The chain crosses the membrane as a helical span at residues 110–132 (LGYYALGLIKMFSLGGLFVFWLV). Over 133–179 (DIILISLQLLGPADGTAYAMAYYGPKAQMIRFDSHTNFSFYTCDGCL) the chain is Extracellular. Residue N169 is glycosylated (N-linked (GlcNAc...) asparagine).

Belongs to the TM2 family.

Its subcellular location is the membrane. The polypeptide is TM2 domain-containing protein Y66D12A.21 (Caenorhabditis elegans).